We begin with the raw amino-acid sequence, 521 residues long: Vang-like protein 2-B (521 aa).

The span at 1 to 18 (MDNDSQYSGYSYKSGQSR) shows a compositional bias: low complexity. The tract at residues 1–73 (MDNDSQYSGY…RDDNWGETTT (73 aa)) is disordered. At 1 to 108 (MDNDSQYSGY…AKLDCSRHLG (108 aa)) the chain is on the cytoplasmic side. Positions 19–33 (SSRKHRDRRERHRSK) are enriched in basic residues. The segment covering 57-67 (ESTRGEDRDDN) has biased composition (basic and acidic residues). A helical membrane pass occupies residues 109–129 (VVIAGALALLSFLTPIAFMLL). The Extracellular segment spans residues 130-147 (PQILWREDLEQCGTACEG). Residues 148-168 (LFISVAFKLLILLLGSWALFF) form a helical membrane-spanning segment. Residues 169–178 (RRPKAFFPRV) lie on the Cytoplasmic side of the membrane. A helical membrane pass occupies residues 179-199 (FVFRALLMVLVFLLVVSYWLF). At 200-218 (YGVRILESRDKNYQGIVQY) the chain is on the extracellular side. Residues 219-239 (AVSLVDALLFVHYLAVVLLEL) traverse the membrane as a helical segment. At 240-521 (RQLQPQFTIK…VMRLQSETSV (282 aa)) the chain is on the cytoplasmic side. The short motif at 518 to 521 (ETSV) is the PDZ-binding element.

The protein belongs to the Vang family. As to quaternary structure, interacts with dvl/dsh. Interacts with prickle3. During gastrulation, broadly expressed in the dorsal region in both mesodermal and neural tissues. From the neurula stages, expressed throughout the neural tube. In tailbud stages, expression declines in the anterior notochord but remains strong in the posterior notochord and in the neural tube. Also weakly expressed in the prenephritic region of late tailbud embryos.

Its subcellular location is the cell membrane. Functionally, has a role in non-canonical Wnt/planar cell polarity (PCP) signaling; can recruit dvl/dsh and prickle from the cytoplasm to the plasma membrane. Acts in a PCP complex to regulate the polarized assembly of fibronectrin on the surface of the mesoderm during gastrulation. Regulates convergent extension in both dorsal mesoderm and neural tissue without affecting cell fate. Regulates neural fold closure during neurulation. May be required for cell surface localization of fzd3 and fzd6 in the inner ear. The sequence is that of Vang-like protein 2-B (vangl2-b) from Xenopus laevis (African clawed frog).